We begin with the raw amino-acid sequence, 145 residues long: Putative sterol 14-demethylase-like protein (145 aa).

The chain crosses the membrane as a helical span at residues Tyr5 to Ile25.

It belongs to the cytochrome P450 family. As to expression, expressed specifically in roots.

The protein resides in the membrane. The polypeptide is Putative sterol 14-demethylase-like protein (CYP51G2) (Arabidopsis thaliana (Mouse-ear cress)).